Reading from the N-terminus, the 377-residue chain is Succinyl-diaminopimelate desuccinylase (377 aa).

His-66 is a binding site for Zn(2+). Residue Asp-68 is part of the active site. Asp-99 contributes to the Zn(2+) binding site. Glu-133 functions as the Proton acceptor in the catalytic mechanism. Zn(2+) contacts are provided by Glu-134, Glu-163, and His-349.

This sequence belongs to the peptidase M20A family. DapE subfamily. In terms of assembly, homodimer. It depends on Zn(2+) as a cofactor. Requires Co(2+) as cofactor.

It carries out the reaction N-succinyl-(2S,6S)-2,6-diaminopimelate + H2O = (2S,6S)-2,6-diaminopimelate + succinate. It participates in amino-acid biosynthesis; L-lysine biosynthesis via DAP pathway; LL-2,6-diaminopimelate from (S)-tetrahydrodipicolinate (succinylase route): step 3/3. Catalyzes the hydrolysis of N-succinyl-L,L-diaminopimelic acid (SDAP), forming succinate and LL-2,6-diaminopimelate (DAP), an intermediate involved in the bacterial biosynthesis of lysine and meso-diaminopimelic acid, an essential component of bacterial cell walls. In Legionella pneumophila (strain Lens), this protein is Succinyl-diaminopimelate desuccinylase.